A 107-amino-acid chain; its full sequence is Regulatory protein SoxS (107 aa).

Residues 8–106 (QDLIAWIDEH…DRTPSDYRHR (99 aa)) form the HTH araC/xylS-type domain. 2 DNA-binding regions (H-T-H motif) span residues 25-46 (DVVA…RTVT) and 73-96 (IFDI…RRQF).

The protein resides in the cytoplasm. Functionally, transcriptional activator of the superoxide response regulon of E.coli that includes at least 10 genes such as sodA, nfo, zwf and micF. Binds the DNA sequence 5'-GCACN(7)CAA-3'. It also facilitates the subsequent binding of RNA polymerase to the micF and the nfo promoters. The polypeptide is Regulatory protein SoxS (soxS) (Escherichia coli O157:H7).